Reading from the N-terminus, the 116-residue chain is Non-specific lipid-transfer protein (116 aa).

An N-terminal signal peptide occupies residues 1-23; sequence MASMKVVCVALIMCIVIAPMAES. 4 disulfides stabilise this stretch: C27–C74, C37–C51, C52–C97, and C72–C111.

Belongs to the plant LTP family.

Plant non-specific lipid-transfer proteins transfer phospholipids as well as galactolipids across membranes. May play a role in wax or cutin deposition in the cell walls of expanding epidermal cells and certain secretory tissues. The protein is Non-specific lipid-transfer protein of Cicer arietinum (Chickpea).